The sequence spans 302 residues: N-acetylmuramic acid 6-phosphate etherase (302 aa).

One can recognise an SIS domain in the interval 58 to 221 (IGEAFLNGGR…STGAMVKTGK (164 aa)). E86 acts as the Proton donor in catalysis. The active site involves E117.

It belongs to the GCKR-like family. MurNAc-6-P etherase subfamily. As to quaternary structure, homodimer.

The enzyme catalyses N-acetyl-D-muramate 6-phosphate + H2O = N-acetyl-D-glucosamine 6-phosphate + (R)-lactate. The protein operates within amino-sugar metabolism; N-acetylmuramate degradation. In terms of biological role, specifically catalyzes the cleavage of the D-lactyl ether substituent of MurNAc 6-phosphate, producing GlcNAc 6-phosphate and D-lactate. In Clostridium botulinum (strain Hall / ATCC 3502 / NCTC 13319 / Type A), this protein is N-acetylmuramic acid 6-phosphate etherase.